A 497-amino-acid polypeptide reads, in one-letter code: 3-octaprenyl-4-hydroxybenzoate carboxy-lyase (497 aa).

Residue Asn175 participates in Mn(2+) binding. Residues 178 to 180 (IYR), 192 to 194 (RWL), and 197 to 198 (RG) contribute to the prenylated FMN site. Glu241 is a Mn(2+) binding site. Asp290 serves as the catalytic Proton donor.

This sequence belongs to the UbiD family. Homohexamer. Requires prenylated FMN as cofactor. Mn(2+) is required as a cofactor.

It is found in the cell membrane. It catalyses the reaction a 4-hydroxy-3-(all-trans-polyprenyl)benzoate + H(+) = a 2-(all-trans-polyprenyl)phenol + CO2. It participates in cofactor biosynthesis; ubiquinone biosynthesis. Catalyzes the decarboxylation of 3-octaprenyl-4-hydroxy benzoate to 2-octaprenylphenol, an intermediate step in ubiquinone biosynthesis. This is 3-octaprenyl-4-hydroxybenzoate carboxy-lyase from Escherichia coli O157:H7.